A 212-amino-acid chain; its full sequence is MIIIFLGPPGAGKGTQGKKIAKKIHLPHIAIGDIFRAIIKTSSKDAEVINSYVEQGKLIPDEIVNHIIKNFLSSSDYKKGYILDGYPRNLEQAKFFESFVTEKIKVIYLNVSDELLIKRILGRYSCKSCGKIYNDYFLKPRIDKICDVCKSSVFEYRKDDNEEVIKERINIFKTETYPLIQHYKNNDDFYMIDGNKNEEQIEDHIEKVLKIN.

10–15 provides a ligand contact to ATP; that stretch reads GAGKGT. The tract at residues 30-59 is NMP; that stretch reads AIGDIFRAIIKTSSKDAEVINSYVEQGKLI. AMP-binding positions include Arg-36, 57–59, 85–88, and Gln-92; these read KLI and GYPR. The interval 122 to 160 is LID; the sequence is GRYSCKSCGKIYNDYFLKPRIDKICDVCKSSVFEYRKDD. ATP is bound at residue Arg-123. Positions 126 and 129 each coordinate Zn(2+). Position 132-133 (132-133) interacts with ATP; that stretch reads IY. The Zn(2+) site is built by Cys-146 and Cys-149. Residues Arg-157 and Arg-168 each contribute to the AMP site. Lys-196 lines the ATP pocket.

It belongs to the adenylate kinase family. Monomer.

The protein localises to the cytoplasm. The enzyme catalyses AMP + ATP = 2 ADP. The protein operates within purine metabolism; AMP biosynthesis via salvage pathway; AMP from ADP: step 1/1. In terms of biological role, catalyzes the reversible transfer of the terminal phosphate group between ATP and AMP. Plays an important role in cellular energy homeostasis and in adenine nucleotide metabolism. This is Adenylate kinase from Rickettsia bellii (strain RML369-C).